Consider the following 160-residue polypeptide: SsrA-binding protein (160 aa).

This sequence belongs to the SmpB family.

Its subcellular location is the cytoplasm. In terms of biological role, required for rescue of stalled ribosomes mediated by trans-translation. Binds to transfer-messenger RNA (tmRNA), required for stable association of tmRNA with ribosomes. tmRNA and SmpB together mimic tRNA shape, replacing the anticodon stem-loop with SmpB. tmRNA is encoded by the ssrA gene; the 2 termini fold to resemble tRNA(Ala) and it encodes a 'tag peptide', a short internal open reading frame. During trans-translation Ala-aminoacylated tmRNA acts like a tRNA, entering the A-site of stalled ribosomes, displacing the stalled mRNA. The ribosome then switches to translate the ORF on the tmRNA; the nascent peptide is terminated with the 'tag peptide' encoded by the tmRNA and targeted for degradation. The ribosome is freed to recommence translation, which seems to be the essential function of trans-translation. This is SsrA-binding protein from Marinobacter nauticus (strain ATCC 700491 / DSM 11845 / VT8) (Marinobacter aquaeolei).